The sequence spans 374 residues: Ribosomal RNA large subunit methyltransferase G (374 aa).

It belongs to the methyltransferase superfamily. RlmG family.

The protein resides in the cytoplasm. The catalysed reaction is guanosine(1835) in 23S rRNA + S-adenosyl-L-methionine = N(2)-methylguanosine(1835) in 23S rRNA + S-adenosyl-L-homocysteine + H(+). In terms of biological role, specifically methylates the guanine in position 1835 (m2G1835) of 23S rRNA. The sequence is that of Ribosomal RNA large subunit methyltransferase G from Pseudomonas syringae pv. syringae (strain B728a).